We begin with the raw amino-acid sequence, 199 residues long: MPEQSNDYRVAVFGAGGVGKSSLVLRFVKGTFRESYIPTVEDTYRQVISCDKSICTLQITDTTGSHQFPAMQRLSISKGHAFILVYSITSRQSLEELKPIYEQICEIKGDVESIPIMLVGNKCDESPNREVQSSEAEALARTWKCAFMETSAKLNHNVKELFQELLNLEKRRTVSLQIDGKKSKQQKRKEKLKGKCVVM.

Residues 14–21 (GAGGVGKS), 33–39 (RESYIPT), 61–65 (DTTGS), and 121–124 (NKCD) contribute to the GTP site. Position 35 is a phosphoserine (serine 35). Positions 36 to 44 (YIPTVEDTY) match the Effector region motif. Residue serine 126 is modified to Phosphoserine. A GTP-binding site is contributed by 152-153 (AK). Cysteine 196 is subject to Cysteine methyl ester. Cysteine 196 is lipidated: S-geranylgeranyl cysteine. The propeptide at 197–199 (VVM) is removed in mature form.

The protein belongs to the small GTPase superfamily. Di-Ras family. Ubiquitinated by the ECS(ASB11) complex via 'Lys-11'-linked ubiquitin chains, leading to its degradation by the proteasome.

Its subcellular location is the cell membrane. The catalysed reaction is GTP + H2O = GDP + phosphate + H(+). Displays low GTPase activity and exists predominantly in the GTP-bound form. In Mus musculus (Mouse), this protein is GTP-binding protein Di-Ras2 (Diras2).